Here is a 264-residue protein sequence, read N- to C-terminus: MRIALGIEYDGTHYYGWQRQREVKSVQEALEKALSKIANHPVEVQCAGRTDAGVHGTGQVVHFDTTAERQMVAWTMGANANLPKDIAVRWAMAVPDEFHARFSATARRYRYVIYNHVYRPGILNSGVSHYHGELDVEKMQQAGQYLLGENDFTSFRAVHCQSRSPWRNVMHLNVTRHGRYVVIDIKANAFVHHMVRNITGSLIAVGRGEQKPEWIQWLLAQKDRTLAAATAKAEGLYLVSVDYPAHFGLPEMPIGPLFLPDNLN.

Asp-51 functions as the Nucleophile in the catalytic mechanism. Residue Tyr-109 participates in substrate binding.

It belongs to the tRNA pseudouridine synthase TruA family. In terms of assembly, homodimer.

The enzyme catalyses uridine(38/39/40) in tRNA = pseudouridine(38/39/40) in tRNA. Its function is as follows. Formation of pseudouridine at positions 38, 39 and 40 in the anticodon stem and loop of transfer RNAs. The polypeptide is tRNA pseudouridine synthase A (Vibrio cholerae serotype O1 (strain ATCC 39541 / Classical Ogawa 395 / O395)).